The primary structure comprises 360 residues: Photosystem II protein D1 (360 aa).

3 consecutive transmembrane segments (helical) span residues 30–47 (YVGWFGVLMIPCLLTAAA), 119–134 (HFLIGISAYMGRQWEL), and 143–157 (WICVAYSAPVSAAFA). His-119 serves as a coordination point for chlorophyll a. Position 127 (Tyr-127) interacts with pheophytin a. [CaMn4O5] cluster contacts are provided by Asp-171 and Glu-190. A helical transmembrane segment spans residues 198-219 (FHMAGVAGMFGGSLFSAMHGSL). His-199 serves as a coordination point for chlorophyll a. A quinone contacts are provided by residues His-216 and 265 to 266 (SF). Fe cation is bound at residue His-216. His-273 lines the Fe cation pocket. Residues 275–289 (FLAVFPVVCVWLTSM) traverse the membrane as a helical segment. [CaMn4O5] cluster contacts are provided by His-333, Glu-334, Asp-343, and Ala-345. A propeptide spanning residues 346-360 (AAESTTVALSAPAIG) is cleaved from the precursor.

The protein belongs to the reaction center PufL/M/PsbA/D family. PSII is composed of 1 copy each of membrane proteins PsbA, PsbB, PsbC, PsbD, PsbE, PsbF, PsbH, PsbI, PsbJ, PsbK, PsbL, PsbM, PsbT, PsbX, PsbY, Psb30/Ycf12, peripheral proteins PsbO, CyanoQ (PsbQ), PsbU, PsbV and a large number of cofactors. It forms dimeric complexes. The D1/D2 heterodimer binds P680, chlorophylls that are the primary electron donor of PSII, and subsequent electron acceptors. It shares a non-heme iron and each subunit binds pheophytin, quinone, additional chlorophylls, carotenoids and lipids. D1 provides most of the ligands for the Mn4-Ca-O5 cluster of the oxygen-evolving complex (OEC). There is also a Cl(-1) ion associated with D1 and D2, which is required for oxygen evolution. The PSII complex binds additional chlorophylls, carotenoids and specific lipids. serves as cofactor. In terms of processing, tyr-162 forms a radical intermediate that is referred to as redox-active TyrZ, YZ or Y-Z. Post-translationally, C-terminally processed by CtpA; processing is essential to allow assembly of the oxygen-evolving complex and thus photosynthetic growth.

It localises to the cellular thylakoid membrane. The catalysed reaction is 2 a plastoquinone + 4 hnu + 2 H2O = 2 a plastoquinol + O2. Its function is as follows. Photosystem II (PSII) is a light-driven water:plastoquinone oxidoreductase that uses light energy to abstract electrons from H(2)O, generating O(2) and a proton gradient subsequently used for ATP formation. It consists of a core antenna complex that captures photons, and an electron transfer chain that converts photonic excitation into a charge separation. The D1/D2 (PsbA/PsbD) reaction center heterodimer binds P680, the primary electron donor of PSII as well as several subsequent electron acceptors. The protein is Photosystem II protein D1 of Prochlorococcus marinus (strain MIT 9301).